Reading from the N-terminus, the 177-residue chain is Large ribosomal subunit protein uL6 (177 aa).

This sequence belongs to the universal ribosomal protein uL6 family. As to quaternary structure, part of the 50S ribosomal subunit.

Functionally, this protein binds to the 23S rRNA, and is important in its secondary structure. It is located near the subunit interface in the base of the L7/L12 stalk, and near the tRNA binding site of the peptidyltransferase center. The chain is Large ribosomal subunit protein uL6 from Rickettsia akari (strain Hartford).